The primary structure comprises 260 residues: Phosphate import ATP-binding protein PstB 2 (260 aa).

The region spanning 9 to 255 is the ABC transporter domain; that stretch reads IKVKDLSFYY…PLDSRTRDYV (247 aa). ATP is bound at residue 41-48; the sequence is GPSGCGKS.

This sequence belongs to the ABC transporter superfamily. Phosphate importer (TC 3.A.1.7) family. The complex is composed of two ATP-binding proteins (PstB), two transmembrane proteins (PstC and PstA) and a solute-binding protein (PstS).

Its subcellular location is the cell inner membrane. It catalyses the reaction phosphate(out) + ATP + H2O = ADP + 2 phosphate(in) + H(+). In terms of biological role, part of the ABC transporter complex PstSACB involved in phosphate import. Responsible for energy coupling to the transport system. The chain is Phosphate import ATP-binding protein PstB 2 from Nostoc sp. (strain PCC 7120 / SAG 25.82 / UTEX 2576).